The chain runs to 455 residues: Mycosin-4 (455 aa).

The signal sequence occupies residues 1–25; it reads MTTSRTLRLLVVSALATLSGLGTPV. The region spanning 74–384 is the Peptidase S8 domain; sequence SAQLADLDQV…NGTVDALAAV (311 aa). Residues Asp98, His129, and Ser329 each act as charge relay system in the active site. Positions 389–417 are disordered; sequence IPQAGTATSDPAPVAVPVPRRSTPGPSDR. Residues 394 to 412 are compositionally biased toward low complexity; sequence TATSDPAPVAVPVPRRSTP. The helical transmembrane segment at 432-452 threads the bilayer; it reads LALMATLATASRRLRPGRNGI.

Belongs to the peptidase S8 family.

The protein localises to the cell membrane. The polypeptide is Mycosin-4 (Mycobacterium tuberculosis (strain ATCC 25618 / H37Rv)).